The following is a 1303-amino-acid chain: MRILRGSPALSEFRVNKLLELCRELSLPVTGIYAEFAHFADVTAELDASEVQKLEKLLTYGPTIEEHEPEGLLLLTTPRPGTISPWSSKSTDIAHNCGLDKIARLERGTAFYIERSEELSELQLIELKAILHDRMMEVVFTDFESASALFAVSEPAPYTEVDLLTGGRKALEDANVTLGLALAEDEIDYLLESFTEKLERNPTDIELMMFAQANSEHCRHKIFNADWTIDGVKQEKSLFKMIKNTFEVTPDNVLSAYKDNAAVMTGSEVGRFFPDPETRQYNYHQEKTHILMKVETHNHPTAISPWPGASTGSGGEIRDEGATGIGGKPKAGLVAFSVSNLKIPNFVQPWETDFGKPSRIVTALDIMLEGPLGGAAFNNEFGRPNLLGYFRTYEEKVNSHAGEEVRGYHKPIMLAGGLGNIRDEHVQKKEIPVGASLIVLGGPAMNIGLGGGAASSMDSGSSSEDLDFASVQRENPEMERRCQEVIDRCWQLGDANPIAFIHDVGAGGISNALPELVDDGERGGIFNLRDVPNDEPGMSPLEIWCNESQERYVMAVADKDMATFDAICKRERAPYAVVGKATEERELKLEDSHFDNTPIDMPMDILLGKTPKMHRDAKTLKANNPAIDRSGIEMNEAVDRVLRLPTVAEKTFLITIGDRSVTGLVARDQMVGPWQVPVANCAVTAASYDSYHGEAMSLGERTPVALLDFGASARLAVGEAITNIAATNIGDIKHIKLSANWMSPAGHPGEDAGLYEAVKAVGEELCPALGLTIPVGKDSMSMKTKWEENGEQKEVTSPLSLVITAFARVEDVRKTITPQLRTPDNLEGLGDTSLVLIDLGNGKNRLGATALAQVYKQLGDKPADVDNAAQLKGFYEGVQALVANDQVVAYHDKGDGGLFVTLAEMAFAGHCGVNANIEALGEDTLAALFNEELGAVIQVRNDDLDAVLSTLAANGLEACSHVIGSVEASDELVIKSGESVVIERNRTELRTIWAETTHKMQGLRDNPACADQEHEAKKDNSDPGLNVKLSFDVNEDIAAPFINTGAKPKMAILREQGVNSHVEMAAAFDRAGFEATDIHMSDILTGQAVLEEYNGLVACGGFSYGDVLGAGEGWAKSVLFNDSTRDQFENFFKREDTFSLGVCNGCQMLSNLRDLIPGAEYWPRFVRNESERFEARFSLVEVQKSDSVFFNGMEGSRMPIAVSHGEGRVEVRDNDHLNAIENSGTVALRYVDNHGNPTQQYPNNPNGSPNAITGLTTTDGRVTIMMPHPERVFRTVANSWSPEGWGENGAWMRMFQNARKNIG.

ATP is bound by residues 308–319 and A679; that span reads GASTGSGGEIRD. Mg(2+)-binding residues include E719, N723, and D892. The interval 1003–1023 is disordered; that stretch reads LRDNPACADQEHEAKKDNSDP. Residues 1011–1021 are compositionally biased toward basic and acidic residues; it reads DQEHEAKKDNS. The Glutamine amidotransferase type-1 domain maps to 1050–1303; it reads MAILREQGVN…MFQNARKNIG (254 aa). The active-site Nucleophile is the C1143. Active-site residues include H1268 and E1270.

The protein in the N-terminal section; belongs to the FGAMS family. In terms of assembly, monomer.

It localises to the cytoplasm. The catalysed reaction is N(2)-formyl-N(1)-(5-phospho-beta-D-ribosyl)glycinamide + L-glutamine + ATP + H2O = 2-formamido-N(1)-(5-O-phospho-beta-D-ribosyl)acetamidine + L-glutamate + ADP + phosphate + H(+). The protein operates within purine metabolism; IMP biosynthesis via de novo pathway; 5-amino-1-(5-phospho-D-ribosyl)imidazole from N(2)-formyl-N(1)-(5-phospho-D-ribosyl)glycinamide: step 1/2. Its function is as follows. Phosphoribosylformylglycinamidine synthase involved in the purines biosynthetic pathway. Catalyzes the ATP-dependent conversion of formylglycinamide ribonucleotide (FGAR) and glutamine to yield formylglycinamidine ribonucleotide (FGAM) and glutamate. The chain is Phosphoribosylformylglycinamidine synthase from Aliivibrio fischeri (strain ATCC 700601 / ES114) (Vibrio fischeri).